Here is a 467-residue protein sequence, read N- to C-terminus: Peptidoglycan-N-acetylmuramic acid deacetylase PdaC (467 aa).

A helical membrane pass occupies residues 6 to 26 (IKWFHVLIAVVCVVGLIGFFH). The NodB homology domain maps to 278-452 (KVIALTFDDG…KLTDQGYQLV (175 aa)). Aspartate 285 functions as the Proton acceptor in the catalytic mechanism. 3 residues coordinate a divalent metal cation: aspartate 286, histidine 336, and histidine 340. Catalysis depends on histidine 427, which acts as the Proton donor.

In the N-terminal section; belongs to the RsiV family. The protein in the C-terminal section; belongs to the polysaccharide deacetylase family.

Its subcellular location is the cell membrane. Its activity is regulated as follows. Activated by divalent metal cations; Mn(2+) is the most efficient, followed by Ca(2+) and Mg(2+). In contrast to PgdA from S.pneumoniae, these ions are not absolutely required for deacetylase activity. Catalyzes the deacetylation of N-acetylmuramic acid (MurNAc) residues in peptidoglycan, a modification that confers resistance to lysosyme. Is not able to deacetylate N-acetylglucosamine (GlcNAc) residues in peptidoglycan, but can deacylate chitin oligomers such as GlcNAc4 and GlcNAc5. Is essentially not active toward chitosan (partially deacetylated GlcNAc polymer) and has very low activity toward chitin (GlcNAc polymer). Does not deacetylate GlcNAc. This Bacillus subtilis (strain 168) protein is Peptidoglycan-N-acetylmuramic acid deacetylase PdaC (pdaC).